The following is a 70-amino-acid chain: Small ribosomal subunit protein bS21B (70 aa).

This sequence belongs to the bacterial ribosomal protein bS21 family.

This Paraburkholderia xenovorans (strain LB400) protein is Small ribosomal subunit protein bS21B.